The following is a 425-amino-acid chain: Dihydroorotase (425 aa).

Zn(2+)-binding residues include His56 and His58. Substrate contacts are provided by residues 58–60 (HYR) and Asn90. Zn(2+)-binding residues include Asp148, His175, and His228. Asn274 contributes to the substrate binding site. Zn(2+) is bound at residue Asp301. Residue Asp301 is part of the active site. Substrate is bound by residues His305 and 319–320 (FG).

It belongs to the metallo-dependent hydrolases superfamily. DHOase family. Class I DHOase subfamily. The cofactor is Zn(2+).

The catalysed reaction is (S)-dihydroorotate + H2O = N-carbamoyl-L-aspartate + H(+). It participates in pyrimidine metabolism; UMP biosynthesis via de novo pathway; (S)-dihydroorotate from bicarbonate: step 3/3. Functionally, catalyzes the reversible cyclization of carbamoyl aspartate to dihydroorotate. This Lactobacillus gasseri (strain ATCC 33323 / DSM 20243 / BCRC 14619 / CIP 102991 / JCM 1131 / KCTC 3163 / NCIMB 11718 / NCTC 13722 / AM63) protein is Dihydroorotase.